The primary structure comprises 30 residues: GDDVKSACCDTCLCTKSNPPICRCVDIRET.

Disulfide bonds link cysteine 9/cysteine 24 and cysteine 14/cysteine 22.

In terms of biological role, inhibits trypsin (IC(50)=17.60 nM) and, to a lesser extent, alpha-chymotrypsin (IC(50)=2.38 uM). The polypeptide is Bowman-Birk type proteinase inhibitor 4 (Lathyrus sativus (White vetchling)).